The following is a 1320-amino-acid chain: Sister chromatid cohesion protein PDS5 homolog A (1320 aa).

HEAT repeat units follow at residues 156-195 (NEIF…EGDG), 272-310 (PLLL…AKDS), 388-426 (NLVN…KYCL), 709-747 (PQIR…NKEV), and 990-1028 (SLLP…CLWF). Polar residues predominate over residues 1158 to 1179 (TFTSETGSNASTNSQPSSPATN). The disordered stretch occupies residues 1158–1320 (TFTSETGSNA…APQRQIDLQR (163 aa)). Residues 1180-1194 (KSRDVSSEVGARENE) are compositionally biased toward basic and acidic residues. Residues 1225 to 1241 (GTENSVSSNPSAGSQPP) are compositionally biased toward polar residues. The segment covering 1255–1267 (AGAATQEKEAGAT) has biased composition (low complexity). The span at 1283–1293 (QDPSSTASTDA) shows a compositional bias: polar residues. The segment covering 1294–1309 (LSDKTPKQQKEAEPKR) has biased composition (basic and acidic residues).

Belongs to the PDS5 family. As to quaternary structure, interacts with the cohesin complex. Binds chromatin in a cohesin-dependent manner.

The protein resides in the nucleus. May regulate sister chromatid cohesion during mitosis and couple it to DNA replication. The chain is Sister chromatid cohesion protein PDS5 homolog A from Danio rerio (Zebrafish).